The following is a 575-amino-acid chain: Alpha-(1,6)-fucosyltransferase (575 aa).

At 1–9 (MRPWTGSWR) the chain is on the cytoplasmic side. Residues 10–30 (WIMLILFAWGTLLFYIGGHLV) form a helical; Signal-anchor for type II membrane protein membrane-spanning segment. Residues 31 to 575 (RDNDHSDHSS…KYPTYPEADK (545 aa)) are Lumenal-facing. Disulfide bonds link C204/C266, C212/C230, and C218/C222. Residues 206-493 (KAKKLVCNIN…PDASANFRSL (288 aa)) form the GT23 domain. S278 is modified (phosphoserine). An SH3-binding motif is present at residues 299-305 (PRPPYLP). The important for donor substrate binding stretch occupies residues 365 to 366 (RR). A disulfide bridge links C465 with C472. Residues 502–563 (PNAHNQIAIY…PSYKVREKIE (62 aa)) form the SH3 domain.

Belongs to the glycosyltransferase 23 family. Tyrosine phosphorylated by PKDCC/VLK. In terms of tissue distribution, highest expression in brain.

Its subcellular location is the golgi apparatus. It localises to the golgi stack membrane. It catalyses the reaction N(4)-{beta-D-GlcNAc-(1-&gt;2)-alpha-D-Man-(1-&gt;3)-[beta-D-GlcNAc-(1-&gt;2)-alpha-D-Man-(1-&gt;6)]-beta-D-Man-(1-&gt;4)-beta-D-GlcNAc-(1-&gt;4)-beta-D-GlcNAc}-L-asparaginyl-[protein] + GDP-beta-L-fucose = an N(4)-{beta-D-GlcNAc-(1-&gt;2)-alpha-D-Man-(1-&gt;3)-[beta-D-GlcNAc-(1-&gt;2)-alpha-D-Man-(1-&gt;6)]-beta-D-Man-(1-&gt;4)-beta-D-GlcNAc-(1-&gt;4)-[alpha-L-Fuc-(1-&gt;6)]-beta-D-GlcNAc}-L-asparaginyl-[protein] + GDP + H(+). The protein operates within protein modification; protein glycosylation. Catalyzes the addition of fucose in alpha 1-6 linkage to the first GlcNAc residue, next to the peptide chains in N-glycans. In Sus scrofa (Pig), this protein is Alpha-(1,6)-fucosyltransferase (FUT8).